The sequence spans 243 residues: Uridylate kinase (243 aa).

Residue 18–21 (KLGG) participates in ATP binding. Gly59 is a binding site for UMP. 2 residues coordinate ATP: Gly60 and Arg64. UMP contacts are provided by residues Asp79 and 140–147 (MGMPYFST). ATP is bound by residues Tyr173 and Asp176.

It belongs to the UMP kinase family. In terms of assembly, homohexamer.

It is found in the cytoplasm. It carries out the reaction UMP + ATP = UDP + ADP. Its pathway is pyrimidine metabolism; CTP biosynthesis via de novo pathway; UDP from UMP (UMPK route): step 1/1. With respect to regulation, inhibited by UTP. Functionally, catalyzes the reversible phosphorylation of UMP to UDP. The chain is Uridylate kinase from Corynebacterium diphtheriae (strain ATCC 700971 / NCTC 13129 / Biotype gravis).